We begin with the raw amino-acid sequence, 88 residues long: Augerpeptide Hhe9a (88 aa).

Positions methionine 1–serine 21 are cleaved as a signal peptide. The propeptide occupies leucine 22–leucine 49. 3 disulfide bridges follow: cysteine 56–cysteine 71, cysteine 61–cysteine 73, and cysteine 67–cysteine 86.

As to expression, expressed by the venom duct.

The protein resides in the secreted. This is Augerpeptide Hhe9a from Hastula hectica (Sea snail).